We begin with the raw amino-acid sequence, 161 residues long: Large ribosomal subunit protein uL10 (161 aa).

This sequence belongs to the universal ribosomal protein uL10 family. In terms of assembly, part of the ribosomal stalk of the 50S ribosomal subunit. The N-terminus interacts with L11 and the large rRNA to form the base of the stalk. The C-terminus forms an elongated spine to which L12 dimers bind in a sequential fashion forming a multimeric L10(L12)X complex.

Its function is as follows. Forms part of the ribosomal stalk, playing a central role in the interaction of the ribosome with GTP-bound translation factors. The sequence is that of Large ribosomal subunit protein uL10 from Campylobacter fetus subsp. fetus (strain 82-40).